Here is a 452-residue protein sequence, read N- to C-terminus: MVEKKFLEAVKKYSLISEGDRILVAFSGGIDSTVLTYLLIKFRDHLKISDIYLAHLNHSLRKESDEDQRFCEDFAKKYGLEIFTKKVDIKSLAEKEKKSIEQKAREERYSFFRKVMEERSINRLATGHHLSDLVETMIMWFIQGNRKGIKGFRPKERDIIRPLYLINKDQIENYAREKGIEYRIDITNFETDFLRNRIRHNIIPHIKGINPSLEGSLLTLSYFLSLDDQYLEEESEKISQKFLNGKIELEELLVYDKALVYRAIQNWIYRKTGVYPSYRQIMDIMEIIEKKEGTKSIRLSPEYNLIRRYSTLYIEKVKEKTEPYQYRIKPGEKIFVKEANLYIKSYIETDYTLDKLKDERKKVCFQIESMEDAEFVVRNRRKGDRFIPFGRKKEKKLKDVMIDLKIPSDMRENIPLVVYGNKILWIAGYKRSAYFPVTEKGKKLICFELEEV.

27 to 32 (SGGIDS) contributes to the ATP binding site.

This sequence belongs to the tRNA(Ile)-lysidine synthase family.

It is found in the cytoplasm. The catalysed reaction is cytidine(34) in tRNA(Ile2) + L-lysine + ATP = lysidine(34) in tRNA(Ile2) + AMP + diphosphate + H(+). Ligates lysine onto the cytidine present at position 34 of the AUA codon-specific tRNA(Ile) that contains the anticodon CAU, in an ATP-dependent manner. Cytidine is converted to lysidine, thus changing the amino acid specificity of the tRNA from methionine to isoleucine. The protein is tRNA(Ile)-lysidine synthase of Persephonella marina (strain DSM 14350 / EX-H1).